Consider the following 369-residue polypeptide: L-lactate oxidase (369 aa).

Positions 13–369 constitute an FMN hydroxy acid dehydrogenase domain; the sequence is EKKLNVLNLD…KNAKLLNIRY (357 aa). Y39 serves as a coordination point for pyruvate. FMN-binding positions include 92 to 94, S121, and Q143; that span reads PAA. Y145 serves as a coordination point for pyruvate. T171 contacts FMN. Residue R180 participates in pyruvate binding. Residues K240 and S262 each coordinate FMN. Pyruvate-binding residues include H264 and R267. H264 (proton acceptor) is an active-site residue. FMN-binding positions include 295–299 and R319; that span reads DSGIR.

The protein belongs to the FMN-dependent alpha-hydroxy acid dehydrogenase family. Homotetramer. It depends on FMN as a cofactor.

It carries out the reaction (S)-lactate + O2 = pyruvate + H2O2. Catalyzes the oxidation of (S)-lactate (L-lactate) to pyruvate, with a reduction of O2 to H2O2. May be involved in the utilization of L-lactate as an energy source for growth. The polypeptide is L-lactate oxidase (Lentilactobacillus hilgardii (strain ATCC 8290 / DSM 20176 / CCUG 30140 / JCM 1155 / KCTC 3500 / NBRC 15886 / NCIMB 8040 / NRRL B-1843 / 9)).